Reading from the N-terminus, the 411-residue chain is Phosphoglycerate kinase (411 aa).

A disordered region spans residues 1–24; the sequence is MTGLCPLHQPSPLDHPHSGGTPMQ. Residues 41–43, Arg56, 79–82, Arg139, and Arg172 contribute to the substrate site; these read DYN and HFGR. ATP is bound by residues Lys222, Gly310, Glu341, and 369 to 372; that span reads GGDS.

Belongs to the phosphoglycerate kinase family. As to quaternary structure, monomer.

The protein localises to the cytoplasm. The enzyme catalyses (2R)-3-phosphoglycerate + ATP = (2R)-3-phospho-glyceroyl phosphate + ADP. Its pathway is carbohydrate degradation; glycolysis; pyruvate from D-glyceraldehyde 3-phosphate: step 2/5. In Deinococcus radiodurans (strain ATCC 13939 / DSM 20539 / JCM 16871 / CCUG 27074 / LMG 4051 / NBRC 15346 / NCIMB 9279 / VKM B-1422 / R1), this protein is Phosphoglycerate kinase.